We begin with the raw amino-acid sequence, 117 residues long: Large ribosomal subunit protein uL22 (117 aa).

This sequence belongs to the universal ribosomal protein uL22 family. As to quaternary structure, part of the 50S ribosomal subunit.

This protein binds specifically to 23S rRNA; its binding is stimulated by other ribosomal proteins, e.g. L4, L17, and L20. It is important during the early stages of 50S assembly. It makes multiple contacts with different domains of the 23S rRNA in the assembled 50S subunit and ribosome. Functionally, the globular domain of the protein is located near the polypeptide exit tunnel on the outside of the subunit, while an extended beta-hairpin is found that lines the wall of the exit tunnel in the center of the 70S ribosome. This is Large ribosomal subunit protein uL22 from Lacticaseibacillus casei (strain BL23) (Lactobacillus casei).